The chain runs to 284 residues: 2-dehydro-3-deoxyphosphooctonate aldolase (284 aa).

This sequence belongs to the KdsA family.

The protein localises to the cytoplasm. The enzyme catalyses D-arabinose 5-phosphate + phosphoenolpyruvate + H2O = 3-deoxy-alpha-D-manno-2-octulosonate-8-phosphate + phosphate. Its pathway is carbohydrate biosynthesis; 3-deoxy-D-manno-octulosonate biosynthesis; 3-deoxy-D-manno-octulosonate from D-ribulose 5-phosphate: step 2/3. It functions in the pathway bacterial outer membrane biogenesis; lipopolysaccharide biosynthesis. This is 2-dehydro-3-deoxyphosphooctonate aldolase from Escherichia coli O6:K15:H31 (strain 536 / UPEC).